Reading from the N-terminus, the 60-residue chain is Large ribosomal subunit protein bL32 (60 aa).

A compositionally biased stretch (basic residues) spans 1–23; the sequence is MAKHPVPKKKTSKSKRDMRRSHH. The tract at residues 1–34 is disordered; it reads MAKHPVPKKKTSKSKRDMRRSHHALTAPNLTECP. Zn(2+) is bound by residues Cys-33, Cys-36, Cys-46, and Cys-49. A C4-type zinc finger spans residues 33–49; the sequence is CPQCHGKKLSHHICPNC.

The protein belongs to the bacterial ribosomal protein bL32 family. Part of the 50S ribosomal subunit. Contacts proteins L17 and L22. Zn(2+) serves as cofactor.

Functionally, forms a cluster with L17 and L22, and with L22, a pair of 'tweezers' that hold together all the domains of the 23S rRNA. Interacts with the antibiotic troleandomycin which blocks the peptide exit tunnel. This chain is Large ribosomal subunit protein bL32 (rpmF), found in Deinococcus radiodurans (strain ATCC 13939 / DSM 20539 / JCM 16871 / CCUG 27074 / LMG 4051 / NBRC 15346 / NCIMB 9279 / VKM B-1422 / R1).